The following is a 295-amino-acid chain: Glycine--tRNA ligase alpha subunit (295 aa).

Belongs to the class-II aminoacyl-tRNA synthetase family. As to quaternary structure, tetramer of two alpha and two beta subunits.

Its subcellular location is the cytoplasm. It catalyses the reaction tRNA(Gly) + glycine + ATP = glycyl-tRNA(Gly) + AMP + diphosphate. The protein is Glycine--tRNA ligase alpha subunit of Rhodospirillum rubrum (strain ATCC 11170 / ATH 1.1.1 / DSM 467 / LMG 4362 / NCIMB 8255 / S1).